Reading from the N-terminus, the 496-residue chain is Ammonium transporter 1 member 2 (496 aa).

11 helical membrane-spanning segments follow: residues 39–59, 74–94, 120–140, 148–168, 192–212, 236–256, 274–296, 307–327, 331–351, 360–380, and 412–432; these read LLFSAYLVFAMQLGFAMLCAG, VLDAAAGALFYYLFGFAFAFG, FFLFQWAFAIAAAGITSGSIA, YLIYSAFLTGFVYPVVSHWIW, FAGSGVVHMVGGVAGLWGALI, LVVLGSFLLWFGWYGFNPGSF, SAVGRTAVTTTLAGSTAALTTLF, VIDVCNGLLGGFAAITAGCSV, WAAIICGFVSAWVLIGLNALA, LEAAQLHGGCGAWGVIFTALF, and IVVILVIAAWVSFTMAPLFLV.

It belongs to the ammonia transporter channel (TC 1.A.11.2) family. As to expression, expressed in exodermis, sclerenchyma, endodermis and pericycle cells of primary root tips.

It localises to the membrane. Ammonium transporter probably involved in ammonium uptake from the soil and ammonium uptake and retrieval in the vascular system. This is Ammonium transporter 1 member 2 (AMT1-2) from Oryza sativa subsp. japonica (Rice).